A 537-amino-acid chain; its full sequence is Organic anion transporter 3 (537 aa).

At 1 to 11 the chain is on the cytoplasmic side; that stretch reads MTFSEILDRVG. Phosphoserine is present on Ser4. A helical membrane pass occupies residues 12–32; it reads SMGPFQYLHVTLLALPILGIA. Residues 33–123 lie on the Extracellular side of the membrane; sequence NHNLLQIFTA…LVCGSNKLKE (91 aa). N-linked (GlcNAc...) asparagine glycosylation is present at Asn81. The helical transmembrane segment at 124 to 144 threads the bilayer; that stretch reads MAQSVFMAGILVGGPVFGELS. Over 145–150 the chain is Cytoplasmic; that stretch reads DRFGRK. Residues 151–171 form a helical membrane-spanning segment; that stretch reads PILTWSYLLLAASGSSAAFSP. Residues 172–176 lie on the Extracellular side of the membrane; that stretch reads SLTVY. Residues 177–197 form a helical membrane-spanning segment; the sequence is MIFRFLCGCSISGISLSTIIL. Residues 198–212 are Cytoplasmic-facing; that stretch reads NVEWVPTSTRAISST. The chain crosses the membrane as a helical span at residues 213-233; that stretch reads TIGYCYTIGQFILPGLAYAVP. Residues 234–236 are Extracellular-facing; that stretch reads QWR. The helical transmembrane segment at 237 to 257 threads the bilayer; the sequence is WLQLSVSAAFFIFSLLSWWVP. The Cytoplasmic segment spans residues 258 to 327; it reads ESIRWLVLSG…FRVSILRRVT (70 aa). The chain crosses the membrane as a helical span at residues 328–348; that stretch reads FCLSLAWFATGFAYYSLAMGV. Topologically, residues 349–354 are extracellular; the sequence is EEFGVN. Residues 355–375 form a helical membrane-spanning segment; sequence IYILQIIFGGVDIPAKFITIL. Residues 376–383 lie on the Cytoplasmic side of the membrane; it reads SISYLGRR. Residues 384–404 form a helical membrane-spanning segment; it reads ITQGFLLILAGVAILALIFVS. The Extracellular portion of the chain corresponds to 405–411; sequence SEMQLLR. The helical transmembrane segment at 412 to 432 threads the bilayer; that stretch reads TALAVFGKGCLSGSFSCLFLY. Residues 433-471 are Cytoplasmic-facing; it reads TSELYPTVLRQTGMGISNIWARVGSMIAPLVKITGELQP. A helical membrane pass occupies residues 472-492; that stretch reads FIPNVIFGTMTLLGGSAAFFL. Over 493–537 the chain is Extracellular; it reads LETLNRPLPETIEDIQDWYQQTKKTKQEPEAEKASQTIPLKTGGP. Residues 513–537 form a disordered region; it reads QTKKTKQEPEAEKASQTIPLKTGGP.

Belongs to the major facilitator (TC 2.A.1) superfamily. Organic cation transporter (TC 2.A.1.19) family. In terms of tissue distribution, expressed mainly in kidney. In kidney, detected in almost all parts of the nephron, including macula densa cells. Expressed (at protein level) throughout the renal cortex. Widely distributed in the brain with no large regional differences. Expressed in the choroid plexus (CP, located in the ventricles of the brain). Expressed in developing bone. Weakly expressed in brain and eye.

The protein resides in the basolateral cell membrane. It carries out the reaction estrone 3-sulfate(out) + glutarate(in) = estrone 3-sulfate(in) + glutarate(out). It catalyses the reaction estrone 3-sulfate(in) + 2-oxoglutarate(out) = estrone 3-sulfate(out) + 2-oxoglutarate(in). The enzyme catalyses taurocholate(out) + glutarate(in) = taurocholate(in) + glutarate(out). The catalysed reaction is dehydroepiandrosterone 3-sulfate(out) + glutarate(in) = dehydroepiandrosterone 3-sulfate(in) + glutarate(out). It carries out the reaction glutarate(in) + 2-oxoglutarate(out) = glutarate(out) + 2-oxoglutarate(in). It catalyses the reaction urate(in) + 2-oxoglutarate(out) = urate(out) + 2-oxoglutarate(in). The enzyme catalyses prostaglandin F2alpha(out) + glutarate(in) = prostaglandin F2alpha(in) + glutarate(out). The catalysed reaction is prostaglandin F2alpha(out) + 2-oxoglutarate(in) = prostaglandin F2alpha(in) + 2-oxoglutarate(out). It carries out the reaction (R)-carnitine(out) + 2-oxoglutarate(in) = (R)-carnitine(in) + 2-oxoglutarate(out). It catalyses the reaction glutarate(in) + (R)-carnitine(out) = glutarate(out) + (R)-carnitine(in). The enzyme catalyses prostaglandin E2(out) + 2-oxoglutarate(in) = prostaglandin E2(in) + 2-oxoglutarate(out). The catalysed reaction is prostaglandin E2(out) + glutarate(in) = prostaglandin E2(in) + glutarate(out). It carries out the reaction urate(in) + glutarate(out) = urate(out) + glutarate(in). It catalyses the reaction taurocholate(out) + 2-oxoglutarate(in) = taurocholate(in) + 2-oxoglutarate(out). The enzyme catalyses dehydroepiandrosterone 3-sulfate(out) + 2-oxoglutarate(in) = dehydroepiandrosterone 3-sulfate(in) + 2-oxoglutarate(out). The catalysed reaction is kynurenate(out) + a dicarboxylate(in) = kynurenate(in) + a dicarboxylate(out). It carries out the reaction (indol-3-yl)acetate(out) + a dicarboxylate(in) = (indol-3-yl)acetate(in) + a dicarboxylate(out). It catalyses the reaction indoxyl sulfate(out) + a dicarboxylate(in) = indoxyl sulfate(in) + a dicarboxylate(out). The enzyme catalyses N-benzoylglycine(out) + a dicarboxylate(in) = N-benzoylglycine(in) + a dicarboxylate(out). The catalysed reaction is 3-carboxy-4-methyl-5-propyl-2-furanpropanoate(out) + a dicarboxylate(in) = 3-carboxy-4-methyl-5-propyl-2-furanpropanoate(in) + a dicarboxylate(out). It carries out the reaction (6R)-L-erythro-5,6,7,8-tetrahydrobiopterin(out) + a dicarboxylate(in) = (6R)-L-erythro-5,6,7,8-tetrahydrobiopterin(in) + a dicarboxylate(out). It catalyses the reaction L-erythro-7,8-dihydrobiopterin(out) + a dicarboxylate(in) = L-erythro-7,8-dihydrobiopterin(in) + a dicarboxylate(out). The enzyme catalyses L-sepiapterin(out) + a dicarboxylate(in) = L-sepiapterin(in) + a dicarboxylate(out). With respect to regulation, expression inhibited by androgens such as testosterone. Its function is as follows. Functions as an organic anion/dicarboxylate exchanger that couples organic anion uptake indirectly to the sodium gradient. Transports organic anions such as estrone 3-sulfate (E1S) and urate in exchange for dicarboxylates such as glutarate or ketoglutarate (2-oxoglutarate). Plays an important role in the excretion of endogenous and exogenous organic anions, especially from the kidney and the brain. E1S transport is pH- and chloride-dependent and may also involve E1S/cGMP exchange. Responsible for the transport of prostaglandin E2 (PGE2) and prostaglandin F2(alpha) (PGF2(alpha)) in the basolateral side of the renal tubule. Involved in the transport of neuroactive tryptophan metabolites kynurenate and xanthurenate. Functions as a biopterin transporters involved in the uptake and the secretion of coenzymes tetrahydrobiopterin (BH4), dihydrobiopterin (BH2) and sepiapterin to urine, thereby determining baseline levels of blood biopterins. May be involved in the basolateral transport of steviol, a metabolite of the popular sugar substitute stevioside. May participate in the detoxification/ renal excretion of drugs and xenobiotics, such as the histamine H(2)-receptor antagonists fexofenadine and cimetidine, the antibiotic benzylpenicillin (PCG), the anionic herbicide 2,4-dichloro-phenoxyacetate (2,4-D), the diagnostic agent p-aminohippurate (PAH), the antiviral acyclovir (ACV), and the mycotoxin ochratoxin (OTA), by transporting these exogenous organic anions across the cell membrane in exchange for dicarboxylates such as 2-oxoglutarate. May contribute to the release of cortisol in the adrenals. Involved in one of the detoxification systems on the choroid plexus (CP), removes substrates such as E1S or taurocholate (TC), PCG, 2,4-D and PAH, from the cerebrospinal fluid (CSF) to the blood for eventual excretion in urine and bile. Also contributes to the uptake of several other organic compounds such as the prostanoids prostaglandin E(2) and prostaglandin F(2-alpha), L-carnitine, and the therapeutic drugs allopurinol, 6-mercaptopurine (6-MP) and 5-fluorouracil (5-FU). Mediates the transport of PAH, PCG, and the statins pravastatin and pitavastatin, from the cerebrum into the blood circulation across the blood-brain barrier (BBB). Contributes to the renal uptake of potent uremic toxins (indoxyl sulfate (IS), indole acetate (IA), hippurate/N-benzoylglycine (HA) and 3-carboxy-4-methyl-5-propyl-2-furanpropionate (CMPF)), pravastatin, PCG, E1S and dehydroepiandrosterone sulfate (DHEAS), and is partly involved in the renal uptake of temocaprilat (an angiotensin-converting enzyme (ACE) inhibitor). In summary, plays a role in the efflux of drugs and xenobiotics, helping reduce their undesired toxicological effects on the body. The sequence is that of Organic anion transporter 3 (Slc22a8) from Mus musculus (Mouse).